The following is a 233-amino-acid chain: Ribonuclease 3 (233 aa).

Positions 4–126 constitute an RNase III domain; the sequence is LNKLMERLGH…IVGSIYIDAG (123 aa). Residue glutamate 39 participates in Mg(2+) binding. The active site involves aspartate 43. Mg(2+) is bound by residues aspartate 112 and glutamate 115. Glutamate 115 is a catalytic residue. The DRBM domain occupies 153–222; the sequence is DAKSLLQEWL…AKRFLELLDD (70 aa).

The protein belongs to the ribonuclease III family. In terms of assembly, homodimer. Requires Mg(2+) as cofactor.

The protein resides in the cytoplasm. It carries out the reaction Endonucleolytic cleavage to 5'-phosphomonoester.. Its function is as follows. Digests double-stranded RNA. Involved in the processing of primary rRNA transcript to yield the immediate precursors to the large and small rRNAs (23S and 16S). Processes some mRNAs, and tRNAs when they are encoded in the rRNA operon. Processes pre-crRNA and tracrRNA of type II CRISPR loci if present in the organism. The chain is Ribonuclease 3 from Coxiella burnetii (strain CbuG_Q212) (Coxiella burnetii (strain Q212)).